The primary structure comprises 268 residues: Type III pantothenate kinase (268 aa).

An ATP-binding site is contributed by 18 to 25; that stretch reads DIGNTTTT. Substrate-binding positions include Y108 and 115 to 118; that span reads GADR. The active-site Proton acceptor is D117. Position 138 (D138) interacts with K(+). T141 is an ATP binding site. T193 is a binding site for substrate.

It belongs to the type III pantothenate kinase family. As to quaternary structure, homodimer. Requires NH4(+) as cofactor. K(+) is required as a cofactor.

Its subcellular location is the cytoplasm. The enzyme catalyses (R)-pantothenate + ATP = (R)-4'-phosphopantothenate + ADP + H(+). The protein operates within cofactor biosynthesis; coenzyme A biosynthesis; CoA from (R)-pantothenate: step 1/5. In terms of biological role, catalyzes the phosphorylation of pantothenate (Pan), the first step in CoA biosynthesis. This Chlorobaculum parvum (strain DSM 263 / NCIMB 8327) (Chlorobium vibrioforme subsp. thiosulfatophilum) protein is Type III pantothenate kinase.